A 94-amino-acid chain; its full sequence is DNA-directed RNA polymerase subunit omega (94 aa).

It belongs to the RNA polymerase subunit omega family. The RNAP catalytic core consists of 2 alpha, 1 beta, 1 beta' and 1 omega subunit. When a sigma factor is associated with the core the holoenzyme is formed, which can initiate transcription.

The catalysed reaction is RNA(n) + a ribonucleoside 5'-triphosphate = RNA(n+1) + diphosphate. Its function is as follows. Promotes RNA polymerase assembly. Latches the N- and C-terminal regions of the beta' subunit thereby facilitating its interaction with the beta and alpha subunits. The polypeptide is DNA-directed RNA polymerase subunit omega (Limosilactobacillus fermentum (strain NBRC 3956 / LMG 18251) (Lactobacillus fermentum)).